The primary structure comprises 309 residues: Formate-nitrite transporter (309 aa).

Residues 1–19 lie on the Cytoplasmic side of the membrane; that stretch reads MPPNNSKYVLDPVSIKSVC. Residues 20–35 constitute an intramembrane region (helical); sequence GGEESYIRCVEYGKKK. Over 36-40 the chain is Cytoplasmic; the sequence is AHYSN. The chain crosses the membrane as a helical span at residues 41–68; sequence LNLLAKAILAGMFVGLCAHASGIAGGLF. Residues 69-79 lie on the Extracellular side of the membrane; that stretch reads YYHKLREIVGA. The chain crosses the membrane as a helical span at residues 80–100; the sequence is SMSVFVYGFTFPIAFMCIICT. Residues 101–122 are Cytoplasmic-facing; that stretch reads GSDLFTGNTLAVTMALYEKKVK. Residues 123-150 form a helical membrane-spanning segment; sequence LLDYLRVMTISLFGNYVGAVSFAFFVSY. Topologically, residues 151-163 are extracellular; that stretch reads LSGAFTNVHAVEK. Positions 164 to 179 form an intramembrane region, helical; sequence NHFFQFLNDIAEKKVH. The Extracellular segment spans residues 180-181; it reads HT. Residues 182–206 traverse the membrane as a helical segment; it reads FVECVSLAVGCNIFVCLAVYFVLTL. Residues 207-209 lie on the Cytoplasmic side of the membrane; that stretch reads KDG. The helical transmembrane segment at 210–226 threads the bilayer; sequence AGYVFSVFFAVYAFAIA. Topologically, residues 227 to 249 are extracellular; that stretch reads GYEHIIANIYTLNIALMVNTKIT. Residues 250-280 form a helical membrane-spanning segment; it reads VYQAYIKNLLPTLLGNYIAGAIVLGLPLYFI. Topologically, residues 281-309 are cytoplasmic; that stretch reads YKEHYYNFERSKRDNNDAQMKSLSIELRN.

It belongs to the FNT transporter (TC 1.A.16) family. Homopentamer.

Its subcellular location is the cell membrane. It is found in the vacuole membrane. The catalysed reaction is (S)-lactate(in) + H(+)(in) = (S)-lactate(out) + H(+)(out). It catalyses the reaction formate(in) + H(+)(in) = formate(out) + H(+)(out). It carries out the reaction pyruvate(out) + H(+)(out) = pyruvate(in) + H(+)(in). The enzyme catalyses acetate(out) + H(+)(out) = acetate(in) + H(+)(in). Inhibited by diethylpyrocarbonate (DEPC). Protonophores, such as 2,4-dinitrophenol and carbonylcyanide-3-chlorophenylhydrazone, abolish transport. Inhibited by phloretin, furosemide, alpha-cyano-4-hydroxy-cinnamate and alpha-fluorocinnamate. Inhibited by the Malaria Box compound MMV007839 and its derivatives BH296 and BH267.meta. Inhibited by the Malaria Box compound MMV000972. Inhibited by broad-specificity anion transport inhibitor NPPB. Functionally, monocarboxylate-proton symporter that mediates the efflux of the waste product lactate in the intraerythrocytic parasites; active in acidic-to-neutral pH range. Transports L-lactate. Transports D-lactate, pyruvate, acetate and formate. Essential for asexual growth but dispensable for the development of gametocytes. The chain is Formate-nitrite transporter from Plasmodium falciparum (isolate 3D7).